Consider the following 75-residue polypeptide: Putative membrane protein insertion efficiency factor 2 (75 aa).

Belongs to the UPF0161 family.

It is found in the cell membrane. In terms of biological role, could be involved in insertion of integral membrane proteins into the membrane. This chain is Putative membrane protein insertion efficiency factor 2, found in Bacillus licheniformis (strain ATCC 14580 / DSM 13 / JCM 2505 / CCUG 7422 / NBRC 12200 / NCIMB 9375 / NCTC 10341 / NRRL NRS-1264 / Gibson 46).